The primary structure comprises 394 residues: RAB6A-GEF complex partner protein 2 (394 aa).

This sequence belongs to the RGP1 family. Forms a complex with RIC1; the interaction enhances RAB6A GTPase activity. Interacts with RIC1. Interacts with RAB6A; the interaction is direct with a preference for RAB6A-GDP. Interacts with RAB33B.

The protein localises to the cytoplasm. The protein resides in the cytosol. It is found in the membrane. The RIC1-RGP1 complex acts as a guanine nucleotide exchange factor (GEF), which activates RAB6A by exchanging bound GDP for free GTP and may thereby required for efficient fusion of endosome-derived vesicles with the Golgi compartment. The RIC1-RGP1 complex participates in the recycling of mannose-6-phosphate receptors. The polypeptide is RAB6A-GEF complex partner protein 2 (Bos taurus (Bovine)).